The sequence spans 318 residues: MSFSSDTKDELARIYPEEEESKIAELAALIRTIGSISMYGNGKISLTFTTENASVARLVFKLIKDLFGIIPETMVRRGRYLKKTLSYLIFVPDTKIAEEILGKVKILNYEKGHIKLNYGIDQKILKNSKAKKAYLRGAFLGGGSISDPEKAYHMEFITHNLEHGKDLSKLINSFDLNSKVIARKNNYVVYLKEGEQIVDVLNIIGAHSALLNLENIRVYKEMRNNVNRIVNCETANLTKTINASLRQIESINYIKETVGLDYLPPNLKEVAELRINYPDLSLKELGQMLVPPVGKSGVNHRLRKIEEISKKLKERRVQ.

The segment at residues 281 to 314 (SLKELGQMLVPPVGKSGVNHRLRKIEEISKKLKE) is a DNA-binding region (H-T-H motif).

This sequence belongs to the WhiA family.

Involved in cell division and chromosome segregation. The polypeptide is Probable cell division protein WhiA (Thermoanaerobacter sp. (strain X514)).